The following is a 157-amino-acid chain: 6,7-dimethyl-8-ribityllumazine synthase (157 aa).

5-amino-6-(D-ribitylamino)uracil-binding positions include Phe-24, 58–60, and 82–84; these read SFE and AVI. Residue 87-88 participates in (2S)-2-hydroxy-3-oxobutyl phosphate binding; it reads ET. The active-site Proton donor is His-90. Residue Phe-115 coordinates 5-amino-6-(D-ribitylamino)uracil. Arg-129 lines the (2S)-2-hydroxy-3-oxobutyl phosphate pocket.

The protein belongs to the DMRL synthase family.

It carries out the reaction (2S)-2-hydroxy-3-oxobutyl phosphate + 5-amino-6-(D-ribitylamino)uracil = 6,7-dimethyl-8-(1-D-ribityl)lumazine + phosphate + 2 H2O + H(+). It functions in the pathway cofactor biosynthesis; riboflavin biosynthesis; riboflavin from 2-hydroxy-3-oxobutyl phosphate and 5-amino-6-(D-ribitylamino)uracil: step 1/2. Catalyzes the formation of 6,7-dimethyl-8-ribityllumazine by condensation of 5-amino-6-(D-ribitylamino)uracil with 3,4-dihydroxy-2-butanone 4-phosphate. This is the penultimate step in the biosynthesis of riboflavin. The polypeptide is 6,7-dimethyl-8-ribityllumazine synthase (Thermus thermophilus (strain ATCC BAA-163 / DSM 7039 / HB27)).